Reading from the N-terminus, the 143-residue chain is Lysozyme C (143 aa).

The N-terminal stretch at 1–15 is a signal peptide; sequence MRCLLLLLLVPVPGA. A C-type lysozyme domain is found at 16-143; it reads KVFERCEWAR…LSSYVAGCGV (128 aa). 4 cysteine pairs are disulfide-bonded: cysteine 21/cysteine 141, cysteine 45/cysteine 129, cysteine 79/cysteine 94, and cysteine 90/cysteine 108. Active-site residues include glutamate 50 and aspartate 67.

The protein belongs to the glycosyl hydrolase 22 family. As to quaternary structure, monomer.

It is found in the secreted. It catalyses the reaction Hydrolysis of (1-&gt;4)-beta-linkages between N-acetylmuramic acid and N-acetyl-D-glucosamine residues in a peptidoglycan and between N-acetyl-D-glucosamine residues in chitodextrins.. Lysozymes have primarily a bacteriolytic function; those in tissues and body fluids are associated with the monocyte-macrophage system and enhance the activity of immunoagents. The chain is Lysozyme C (lys) from Scophthalmus maximus (Turbot).